The following is a 365-amino-acid chain: MRPQDSTGVAELQEPGLPLTDDAPPGATEEPAAAEAAGAPDRGRCWLCLSSPCCSRTEPEAKKKAPCPGLGLFYTLLSAFLFSVGSLFVKKVQDVHAVEISAFRCVFQMLVVIPCLIYRKTGFIGPKGQRIFLILRGVLGSTAMMLIYYAYQTMSLADATVITFSSPVFTSIFAWICLKEKYSPWDALFTVFTITGVILIVRPPFLFGSDTSGMEESYSGHLKGTFAAIGSAVFAASTLVILRKMGKSVDYFLSIWYYVVLGLVESVIILSVLGEWSLPYCGLDRLFLIFIGLFGLGGQIFITKALQIEKAGPVAIMKTMDVVFAFIFQIIFFNNVPTWWTVGGALCVVASNVGAAIRKWYQSSK.

The disordered stretch occupies residues 1–33 (MRPQDSTGVAELQEPGLPLTDDAPPGATEEPAA). The span at 23 to 33 (APPGATEEPAA) shows a compositional bias: low complexity. 10 helical membrane passes run 69–89 (GLGL…SLFV), 97–117 (AVEI…PCLI), 131–151 (IFLI…YYAY), 156–176 (LADA…FAWI), 187–207 (ALFT…PFLF), 222–242 (LKGT…LVIL), 252–272 (FLSI…ILSV), 286–306 (LFLI…TKAL), 311–333 (AGPV…IIFF), and 338–357 (TWWT…GAAI). EamA domains follow at residues 80–202 (FLFS…LIVR) and 233–357 (VFAA…GAAI).

Belongs to the TMEM20 family. In terms of assembly, interacts with STIM1; stimulated by depletion of intracellular calcium. Interacts with ORAI1. Interacts with the plasma membrane calcium-transporting ATPases ATP2B1 and ATP2B4. Interacts with ATP1A1, ATP2A2, KPNB1 and XPO1. Ubiquitously expressed.

The protein localises to the cell membrane. Its subcellular location is the endoplasmic reticulum membrane. Functionally, may play a role in intracellular calcium sensing and homeostasis. May act as a negative regulator of plasma membrane calcium-transporting ATPases preventing calcium efflux from the cell. This is Solute carrier family 35 member G1 (SLC35G1) from Homo sapiens (Human).